The following is a 730-amino-acid chain: MEANKREIVDFGGLRSYFFPNLAHYITKNDEELFNNTSQANKLAAFVLGASKDAPGDEDILEMILPNDANAAVIAAGMDVCLLLGDKFRPKFDAAAEKLSGLGHAHDLVSVIDDDKKLGMLARKAKLKKTEDAKILQALLKVIAIDDAAEKFVELTELVSQLDLDFDVYVLTKILGLISEETSDEVDIIRDNVVNAFDSCKPLLKQLMLDGPKSEPADPFISLLMDPLEESVGKVVNHIAQLFEEASKNEGDESLVLRSQLGYQLFFLIVRSLADGKREVSKKILSGIPTSVRAEVFPGLQRSVYKSAVFLGNHIIQVLLGSKKSFEDWDVVGVAKDLESAWKRRAIAELIKKFQVSILEQCFDKPVPLIPQSPLNNDAVIDNVNKALQFALWLTEFYGSENETEALGELRFLDSTSKNLLVDSFKKFVQGINSKTHVTRIVESLEKCCLSDTPSGRKSNVQPSTSQQQDSAYTKEEMTTVHNTYSVNTKAQVLNGLSDTNSSGLLVDSKDSLSLQEISCDEVDSSTLLSSSRNIGEGVTVKAVDPVPEKVNDAQQQQTVNEIEMASDANQDTSSSASPEVAPSFSTDGWDSPTKSVALPPGMQQIDEEETTVADKDSTPQPQARAETAWGSGDATPMPLPAPTNQYKVSGFGEAKVAKGFGQFAPTSSAYGGGGGRGGYGGGDRGGRGGYGGDRGGRGGYGGGDRGGRGGYGGDRGRGGYGGRGGRGGF.

The segment at 205 to 447 (KQLMLDGPKS…VTRIVESLEK (243 aa)) is involved in dimerization. The Proton acceptor role is filled by H437. Composition is skewed to polar residues over residues 452–472 (DTPSGRKSNVQPSTSQQQDSA) and 568–595 (DANQDTSSSASPEVAPSFSTDGWDSPTK). Disordered regions lie at residues 452–475 (DTPSGRKSNVQPSTSQQQDSAYTK), 567–639 (SDAN…TPMP), and 686–730 (GGRG…RGGF). Positions 674-730 (GGGRGGYGGGDRGGRGGYGGDRGGRGGYGGGDRGGRGGYGGDRGRGGYGGRGGRGGF) are RNA-binding RGG-box.

In terms of assembly, homodimer. Interacts with pgl-2 and pgl-3; this association is not required for P-granule localization of either pgl-2 or pgl-3. Interacts with ife-1. Interacts with prmt-1; the interaction is direct. Interacts with nmad-1. Interacts with P granule components meg-1, meg-3 and meg-4. Does not require metal ions for catalytic activity. serves as cofactor. Methylated at arginine residues in the RNA-binding RGG-box by prmt-1. Methylation promotes P-granule degradation by autophagy. In terms of tissue distribution, expressed in the germline. Expressed in most somatic cells.

It is found in the cytoplasmic granule. It catalyses the reaction [RNA] containing guanosine + H2O = an [RNA fragment]-3'-guanosine-3'-phosphate + a 5'-hydroxy-ribonucleotide-3'-[RNA fragment].. Not inhibited by RNase inhibitor RNasin. In terms of biological role, guanyl-specific endoribonuclease which cleaves the phosphodiester bond in single-stranded RNA between the 3'-guanylic residue and the 5'-OH residue of adjacent nucleotide, resulting in the formation of a corresponding 2',3'-cyclic phosphate intermediate. Together with the P-granule component pgl-3, is involved in the formation of P-granules. Together with pgl-3, probably recruits other granule components such as pos-1, mex-3 and glh-1 to P-granules. In addition, may act redundantly with pgl-3 to protect germ cells from excessive germline apoptosis during normal oogenesis and development of the two gonadal arms. This may in part be through regulating the localization of sir-2.1 which is involved in germ cell apoptosis. May protect somatic cells from excessive apoptosis during normal development. Essential role in male and female postembryonic germline development; maternally provided protein maintains a population of proliferating germ cells and zygotic expression is required for correct oogenesis. In Caenorhabditis elegans, this protein is Guanyl-specific ribonuclease pgl-1.